Reading from the N-terminus, the 536-residue chain is Apolipoprotein N-acyltransferase (536 aa).

6 consecutive transmembrane segments (helical) span residues 34 to 54 (PLWW…RPGA), 64 to 84 (ALIG…WLFI), 89 to 109 (YGAL…AFLA), 129 to 149 (GAAL…GSLW), 172 to 192 (YVGV…CVQW), and 199 to 219 (HWPM…AAVQ). Residues 244-487 (LQGNIAQDEK…RGVLRGQVHG (244 aa)) enclose the CN hydrolase domain. Glu283 (proton acceptor) is an active-site residue. Lys345 is a catalytic residue. Catalysis depends on Cys395, which acts as the Nucleophile. Residues 503–523 (WWVARWGLWPLWALAALALAW) traverse the membrane as a helical segment.

Belongs to the CN hydrolase family. Apolipoprotein N-acyltransferase subfamily.

It localises to the cell inner membrane. The enzyme catalyses N-terminal S-1,2-diacyl-sn-glyceryl-L-cysteinyl-[lipoprotein] + a glycerophospholipid = N-acyl-S-1,2-diacyl-sn-glyceryl-L-cysteinyl-[lipoprotein] + a 2-acyl-sn-glycero-3-phospholipid + H(+). Its pathway is protein modification; lipoprotein biosynthesis (N-acyl transfer). Its function is as follows. Catalyzes the phospholipid dependent N-acylation of the N-terminal cysteine of apolipoprotein, the last step in lipoprotein maturation. This is Apolipoprotein N-acyltransferase from Verminephrobacter eiseniae (strain EF01-2).